The primary structure comprises 789 residues: Protein translocase subunit SecA 2 (789 aa).

ATP is bound by residues Gln79, 97–101, and Asp487; that span reads GEGKT.

It belongs to the SecA family. Monomer and homodimer. Part of the essential Sec protein translocation apparatus which comprises SecA, SecYEG and auxiliary proteins SecDF. Other proteins may also be involved.

The protein resides in the cell membrane. It localises to the cytoplasm. It carries out the reaction ATP + H2O + cellular proteinSide 1 = ADP + phosphate + cellular proteinSide 2.. Its function is as follows. Part of the Sec protein translocase complex. Interacts with the SecYEG preprotein conducting channel. Has a central role in coupling the hydrolysis of ATP to the transfer of proteins into and across the cell membrane, serving as an ATP-driven molecular motor driving the stepwise translocation of polypeptide chains across the membrane. This Pediococcus pentosaceus (strain ATCC 25745 / CCUG 21536 / LMG 10740 / 183-1w) protein is Protein translocase subunit SecA 2.